The chain runs to 461 residues: Lysosomal proton-coupled steroid conjugate and bile acid symporter SLC46A3 (461 aa).

Positions 1–25 are cleaved as a signal peptide; it reads MKIPFVEPVICLSVFAVTLNSPLTT. Topologically, residues 26 to 70 are extracellular; sequence QYVYRRIWEETGNYSIALESNTSECAKNKSSPIFAFQEEVQKKVS. N-linked (GlcNAc...) asparagine glycans are attached at residues asparagine 38, asparagine 46, and asparagine 53. A helical transmembrane segment spans residues 71-91; the sequence is LFNLEMDISGLIPGLVSTFVF. Residues 92-101 lie on the Cytoplasmic side of the membrane; sequence LSHSDHGGRK. A helical membrane pass occupies residues 102 to 124; it reads FPLILSSVGALANSAWLCLLSYF. Residues 125 to 133 are Extracellular-facing; sequence ALPIQLLIA. A helical membrane pass occupies residues 134–156; it reads STFIGALFGNYTTFLGASFAYIV. Over 157 to 170 the chain is Cytoplasmic; the sequence is DQCKEKKQRTIRIA. Residues 171–191 form a helical membrane-spanning segment; sequence IIDFLFGVVSGLTGLSSGYFI. Topologically, residues 192–195 are extracellular; the sequence is RGLG. The helical transmembrane segment at 196 to 216 threads the bilayer; that stretch reads FVWSFLIVTVALFVNLIYILL. Over 217-261 the chain is Cytoplasmic; the sequence is FLEDSMKESSSQNISVSWTETFKNLFHRTYMLFKNASGEQQSLCC. A helical transmembrane segment spans residues 262-282; sequence LLLFTMITYFFVTIGVSPIFV. Over 283–294 the chain is Extracellular; sequence LYELDSPLCWDE. A helical membrane pass occupies residues 295–315; sequence VLIGYGSALGSVTFFSSFLGI. The Cytoplasmic portion of the chain corresponds to 316 to 324; that stretch reads WLFSYCMED. The helical transmembrane segment at 325 to 345 threads the bilayer; that stretch reads IHMAFIGTFTTMVGMAMTAFA. Residues 346-347 are Extracellular-facing; it reads RT. Residues 348-368 form a helical membrane-spanning segment; it reads TLMMFLVRLPFLFTVMPLSVL. The Cytoplasmic segment spans residues 369-382; sequence RSMISKVVHSTEQG. The chain crosses the membrane as a helical span at residues 383-403; it reads TMFACLAFLETLGGITAVSTF. The Extracellular portion of the chain corresponds to 404–415; that stretch reads NGIYSATVAWCK. A helical transmembrane segment spans residues 416–436; that stretch reads GFVFLLSAVLLLIPAISLCVI. The Cytoplasmic portion of the chain corresponds to 437–461; the sequence is KYVSRNTGSYVLLIQEESSEDTSDR. The Tyrosine-based lysosomal-sorting motif signature appears at 446–449; sequence YVLL.

This sequence belongs to the major facilitator superfamily. SLC46A family.

It is found in the lysosome membrane. It catalyses the reaction estrone 3-sulfate(out) + n H(+)(out) = estrone 3-sulfate(in) + n H(+)(in). It carries out the reaction 25-hydroxyvitamin D3 sulfate(out) + n H(+)(out) = 25-hydroxyvitamin D3 sulfate(in) + n H(+)(in). The catalysed reaction is cholate(out) + n H(+)(out) = cholate(in) + n H(+)(in). The enzyme catalyses glycocholate(out) + n H(+)(out) = glycocholate(in) + n H(+)(in). It catalyses the reaction taurocholate(out) + n H(+)(out) = taurocholate(in) + n H(+)(in). It carries out the reaction dehydroepiandrosterone 3-sulfate(out) + n H(+)(out) = dehydroepiandrosterone 3-sulfate(in) + n H(+)(in). The catalysed reaction is N-acetyl-D-muramoyl-L-alanyl-D-isoglutamine(out) + n H(+)(out) = N-acetyl-D-muramoyl-L-alanyl-D-isoglutamine(in) + n H(+)(in). The enzyme catalyses 2',3'-cGAMP(out) + n H(+)(out) = 2',3'-cGAMP(in) + n H(+)(in). In terms of biological role, lysosomal proton-coupled steroid conjugate and bile acid transporter. Preferentially recognizes lipophilic steroid conjugates or bile acis as endogenous substrates and seems to mediate escape from lysosomes to the cytoplasm. Modulates hepatic cytosolic copper homeostasis, maybe acting as a lysosomal copper transporter and sequestering copper ions in the lysosome. Delivers pathogen-associated molecular patterns to cytosolic pattern recognition receptors as part of the innate immune response to microbes. Selectively transports bacterial muramyl dipeptide (MDP) into the cytosol for recognition by NOD2, triggering inflammatory responses. Likely acts as a redundant importer of cyclic GMP-AMP dinucleotides (cGAMPs) in monocyte and macrophage cell lineages. The transport mechanism, its electrogenicity and stoichiometry remain to be elucidated. The polypeptide is Lysosomal proton-coupled steroid conjugate and bile acid symporter SLC46A3 (SLC46A3) (Bos taurus (Bovine)).